The following is a 153-amino-acid chain: Small ribosomal subunit protein uS11 (153 aa).

Belongs to the universal ribosomal protein uS11 family.

The chain is Small ribosomal subunit protein uS11 (RPS14) from Chlamydomonas reinhardtii (Chlamydomonas smithii).